A 196-amino-acid polypeptide reads, in one-letter code: DnaA initiator-associating protein DiaA (196 aa).

Residues 34 to 196 (LVQSLLNGNK…DNTLFPHQDD (163 aa)) enclose the SIS domain.

Belongs to the SIS family. DiaA subfamily. In terms of assembly, homotetramer; dimer of dimers.

Required for the timely initiation of chromosomal replication via direct interactions with the DnaA initiator protein. This is DnaA initiator-associating protein DiaA from Yersinia enterocolitica serotype O:8 / biotype 1B (strain NCTC 13174 / 8081).